Consider the following 184-residue polypeptide: Endoribonuclease YbeY (184 aa).

The Zn(2+) site is built by H118, H122, and H128. Residues 156 to 184 form a disordered region; it reads YHQDRQSQKDQRLLDKSRYFDELNHGDTP. Positions 157-184 are enriched in basic and acidic residues; sequence HQDRQSQKDQRLLDKSRYFDELNHGDTP.

It belongs to the endoribonuclease YbeY family. It depends on Zn(2+) as a cofactor.

It is found in the cytoplasm. Functionally, single strand-specific metallo-endoribonuclease involved in late-stage 70S ribosome quality control and in maturation of the 3' terminus of the 16S rRNA. This Mycolicibacterium vanbaalenii (strain DSM 7251 / JCM 13017 / BCRC 16820 / KCTC 9966 / NRRL B-24157 / PYR-1) (Mycobacterium vanbaalenii) protein is Endoribonuclease YbeY.